Here is a 160-residue protein sequence, read N- to C-terminus: CST complex subunit STN1 (160 aa).

Positions 41–133 form a DNA-binding region, OB; the sequence is VEIVGTIVSR…QITANVAVAE (93 aa).

Belongs to the STN1 family. Component of the CST complex, composed of CTC1, TEN1 and STN1. Interacts with CTC1. Interacts with TEN1. Interacts with POT1A. In vitro interaction with TEN1 and POT1A is mutually exclusive, indicating that POT1A and TEN1 may compete for the same binding site. In terms of tissue distribution, widely expressed.

The protein resides in the nucleus. The protein localises to the chromosome. It localises to the telomere. In terms of biological role, component of the CST complex, a complex that binds to single-stranded DNA and is required to protect telomeres from DNA degradation. The CST complex binds single-stranded DNA with high affinity in a sequence-independent manner, while isolated subunits bind DNA with low affinity by themselves. Associates with enzymatically active telomerase. Plays a genomewide role in DNA replication and facilitates re-replication at non-telomeric loci. The protein is CST complex subunit STN1 of Arabidopsis thaliana (Mouse-ear cress).